The sequence spans 132 residues: Fumarate reductase subunit C (132 aa).

The next 3 membrane-spanning stretches (helical) occupy residues 36-56, 70-90, and 110-130; these read AIPT…LGSL, IVII…VTYY, and IITM…LVFM.

This sequence belongs to the FrdC family. In terms of assembly, part of an enzyme complex containing four subunits: a flavoprotein (FrdA), an iron-sulfur protein (FrdB), and two hydrophobic anchor proteins (FrdC and FrdD).

The protein resides in the cell inner membrane. Functionally, anchors the catalytic components of the fumarate reductase complex to the cell membrane, binds quinones. This chain is Fumarate reductase subunit C, found in Pasteurella multocida (strain Pm70).